Reading from the N-terminus, the 202-residue chain is Small ribosomal subunit protein uS2 (202 aa).

It belongs to the universal ribosomal protein uS2 family.

This Pyrococcus horikoshii (strain ATCC 700860 / DSM 12428 / JCM 9974 / NBRC 100139 / OT-3) protein is Small ribosomal subunit protein uS2 (rps2).